The sequence spans 334 residues: 3-ketodihydrosphingosine reductase (334 aa).

The N-terminal stretch at 1-20 (MIIYILFSLLAAVIVHLVYK) is a signal peptide. The NADPH site is built by glycine 36, serine 38, serine 39, glycine 40, arginine 62, lysine 66, aspartate 100, and isoleucine 101. The GXSXG motif lies at 36–40 (GGSSG). Catalysis depends on serine 182, which acts as the Proton donor. The active-site Proton acceptor is tyrosine 196. Residues tyrosine 196 and lysine 200 each coordinate NADP(+). Lysine 200 functions as the Lowers pKa of active site Tyr in the catalytic mechanism.

Belongs to the short-chain dehydrogenases/reductases (SDR) family.

It localises to the endoplasmic reticulum. The enzyme catalyses sphinganine + NADP(+) = 3-oxosphinganine + NADPH + H(+). Its pathway is lipid metabolism; sphingolipid metabolism. In terms of biological role, catalyzes the reduction of 3'-oxosphinganine (3-ketodihydrosphingosine/KDS) to sphinganine (dihydrosphingosine/DHS), the second step of de novo sphingolipid biosynthesis. In Dictyostelium discoideum (Social amoeba), this protein is 3-ketodihydrosphingosine reductase (ksrA-1).